Consider the following 245-residue polypeptide: Carbohydrate deacetylase (245 aa).

Mg(2+) contacts are provided by H59 and H125.

This sequence belongs to the YdjC deacetylase family. As to quaternary structure, homodimer. Requires Mg(2+) as cofactor.

Probably catalyzes the deacetylation of acetylated carbohydrates an important step in the degradation of oligosaccharides. In Listeria monocytogenes serotype 4b (strain CLIP80459), this protein is Carbohydrate deacetylase.